Reading from the N-terminus, the 295-residue chain is Cytidine deaminase (295 aa).

CMP/dCMP-type deaminase domains follow at residues 48–168 (EDAD…FGPA) and 187–295 (DDDE…YLSL). Residue 89–91 (NME) participates in substrate binding. His-102 is a Zn(2+) binding site. Glu-104 functions as the Proton donor in the catalytic mechanism. Zn(2+)-binding residues include Cys-129 and Cys-132.

The protein belongs to the cytidine and deoxycytidylate deaminase family. As to quaternary structure, homodimer. Zn(2+) is required as a cofactor.

It carries out the reaction cytidine + H2O + H(+) = uridine + NH4(+). The enzyme catalyses 2'-deoxycytidine + H2O + H(+) = 2'-deoxyuridine + NH4(+). This enzyme scavenges exogenous and endogenous cytidine and 2'-deoxycytidine for UMP synthesis. The sequence is that of Cytidine deaminase from Vibrio cholerae serotype O1 (strain ATCC 39315 / El Tor Inaba N16961).